Here is a 413-residue protein sequence, read N- to C-terminus: Ribulose bisphosphate carboxylase large chain (413 aa).

Substrate is bound by residues Asn100 and Thr150. The active-site Proton acceptor is Lys152. Substrate is bound at residue Lys154. The Mg(2+) site is built by Lys178, Asp180, and Glu181. Position 178 is an N6-carboxylysine (Lys178). His271 acts as the Proton acceptor in catalysis. Positions 272, 304, and 356 each coordinate substrate.

The protein belongs to the RuBisCO large chain family. Type I subfamily. As to quaternary structure, heterohexadecamer of 8 large chains and 8 small chains; disulfide-linked. The disulfide link is formed within the large subunit homodimers. Requires Mg(2+) as cofactor. Post-translationally, the disulfide bond which can form in the large chain dimeric partners within the hexadecamer appears to be associated with oxidative stress and protein turnover.

It is found in the plastid. Its subcellular location is the chloroplast. The catalysed reaction is 2 (2R)-3-phosphoglycerate + 2 H(+) = D-ribulose 1,5-bisphosphate + CO2 + H2O. The enzyme catalyses D-ribulose 1,5-bisphosphate + O2 = 2-phosphoglycolate + (2R)-3-phosphoglycerate + 2 H(+). RuBisCO catalyzes two reactions: the carboxylation of D-ribulose 1,5-bisphosphate, the primary event in carbon dioxide fixation, as well as the oxidative fragmentation of the pentose substrate in the photorespiration process. Both reactions occur simultaneously and in competition at the same active site. The sequence is that of Ribulose bisphosphate carboxylase large chain (rbcL) from Adiantum pedatum (Northern maidenhair fern).